Reading from the N-terminus, the 223-residue chain is uncharacterized protein (223 aa).

The segment at 117-148 (THAHTHAHTHGHTHTRAHSTHAHTHAHSHYHT) is disordered.

This is an uncharacterized protein from Homo sapiens (Human).